A 21-amino-acid chain; its full sequence is Mast cell protease 3 (21 aa).

The Peptidase S1 domain occupies 1-21 (IIGGVESRPHSRPYMATLEIT). A disordered region spans residues 1-21 (IIGGVESRPHSRPYMATLEIT).

Belongs to the peptidase S1 family. Granzyme subfamily.

Its function is as follows. Thrombin inactivating protease. Displays chymotrypsin-like substrate specificity. This Mus musculus (Mouse) protein is Mast cell protease 3 (Mcpt3).